The primary structure comprises 369 residues: Probable dual-specificity RNA methyltransferase RlmN (369 aa).

Glu98 acts as the Proton acceptor in catalysis. The 236-residue stretch at 106-341 (STSRNTLCIS…VTVRKSRGAD (236 aa)) folds into the Radical SAM core domain. Cysteines 113 and 346 form a disulfide. [4Fe-4S] cluster contacts are provided by Cys120, Cys124, and Cys127. Residues 171 to 172 (GE), Ser204, 227 to 229 (SLH), and Asn303 contribute to the S-adenosyl-L-methionine site. Catalysis depends on Cys346, which acts as the S-methylcysteine intermediate.

This sequence belongs to the radical SAM superfamily. RlmN family. Requires [4Fe-4S] cluster as cofactor.

It is found in the cytoplasm. The catalysed reaction is adenosine(2503) in 23S rRNA + 2 reduced [2Fe-2S]-[ferredoxin] + 2 S-adenosyl-L-methionine = 2-methyladenosine(2503) in 23S rRNA + 5'-deoxyadenosine + L-methionine + 2 oxidized [2Fe-2S]-[ferredoxin] + S-adenosyl-L-homocysteine. The enzyme catalyses adenosine(37) in tRNA + 2 reduced [2Fe-2S]-[ferredoxin] + 2 S-adenosyl-L-methionine = 2-methyladenosine(37) in tRNA + 5'-deoxyadenosine + L-methionine + 2 oxidized [2Fe-2S]-[ferredoxin] + S-adenosyl-L-homocysteine. Specifically methylates position 2 of adenine 2503 in 23S rRNA and position 2 of adenine 37 in tRNAs. The polypeptide is Probable dual-specificity RNA methyltransferase RlmN (Chloroherpeton thalassium (strain ATCC 35110 / GB-78)).